The chain runs to 588 residues: Phosphomethylpyrimidine synthase (588 aa).

Residues Asn212, Met241, Tyr270, His306, 326–328 (SRG), 367–370 (DGLR), and Glu406 each bind substrate. His410 is a binding site for Zn(2+). Residue Tyr433 coordinates substrate. His474 contacts Zn(2+). Positions 554, 557, and 562 each coordinate [4Fe-4S] cluster.

It belongs to the ThiC family. In terms of assembly, homodimer. It depends on [4Fe-4S] cluster as a cofactor.

The catalysed reaction is 5-amino-1-(5-phospho-beta-D-ribosyl)imidazole + S-adenosyl-L-methionine = 4-amino-2-methyl-5-(phosphooxymethyl)pyrimidine + CO + 5'-deoxyadenosine + formate + L-methionine + 3 H(+). Its pathway is cofactor biosynthesis; thiamine diphosphate biosynthesis. Functionally, catalyzes the synthesis of the hydroxymethylpyrimidine phosphate (HMP-P) moiety of thiamine from aminoimidazole ribotide (AIR) in a radical S-adenosyl-L-methionine (SAM)-dependent reaction. The polypeptide is Phosphomethylpyrimidine synthase (Bartonella quintana (strain Toulouse) (Rochalimaea quintana)).